Reading from the N-terminus, the 247-residue chain is Isoprenyl transferase (247 aa).

Residue Asp-18 is part of the active site. Asp-18 lines the Mg(2+) pocket. Substrate is bound by residues 19 to 22 (GNGR), Trp-23, Arg-31, His-35, and 63 to 65 (SSE). The active-site Proton acceptor is Asn-66. Residues Trp-67, Arg-69, Arg-186, and 192 to 194 (RLS) contribute to the substrate site. Glu-205 contacts Mg(2+).

It belongs to the UPP synthase family. Homodimer. Mg(2+) serves as cofactor.

In terms of biological role, catalyzes the condensation of isopentenyl diphosphate (IPP) with allylic pyrophosphates generating different type of terpenoids. The sequence is that of Isoprenyl transferase from Agrobacterium fabrum (strain C58 / ATCC 33970) (Agrobacterium tumefaciens (strain C58)).